Consider the following 99-residue polypeptide: Progonadoliberin-1 (99 aa).

Residues Met-1 to Cys-26 form the signal peptide. Pyrrolidone carboxylic acid is present on Gln-27. Gly-36 carries the post-translational modification Glycine amide.

This sequence belongs to the GnRH family.

The protein localises to the secreted. Stimulates the secretion of gonadotropins. The sequence is that of Progonadoliberin-1 (gnrh1) from Dicentrarchus labrax (European seabass).